A 165-amino-acid chain; its full sequence is Phosphopantetheine adenylyltransferase (165 aa).

A substrate-binding site is contributed by Ser9. ATP contacts are provided by residues 9–10 (SF) and His17. Lys41, Ile75, and Arg89 together coordinate substrate. Residues 90–92 (GVR), Glu100, and 125–131 (YLFVRSD) each bind ATP.

It belongs to the bacterial CoaD family. Homohexamer. Mg(2+) is required as a cofactor.

The protein localises to the cytoplasm. The catalysed reaction is (R)-4'-phosphopantetheine + ATP + H(+) = 3'-dephospho-CoA + diphosphate. Its pathway is cofactor biosynthesis; coenzyme A biosynthesis; CoA from (R)-pantothenate: step 4/5. Reversibly transfers an adenylyl group from ATP to 4'-phosphopantetheine, yielding dephospho-CoA (dPCoA) and pyrophosphate. This chain is Phosphopantetheine adenylyltransferase, found in Borrelia hermsii (strain HS1 / DAH).